Consider the following 374-residue polypeptide: Cathepsin W (374 aa).

Residues 1-21 form the signal peptide; the sequence is MAITVYLSCLLVLSMAGLAQG. Positions 22 to 127 are excised as a propeptide; that stretch reads IKSSLRSQDP…EVGSEEWGES (106 aa). Cystine bridges form between Cys-150–Cys-191 and Cys-184–Cys-226. Cys-153 is a catalytic residue. Asn-205 is a glycosylation site (N-linked (GlcNAc...) asparagine). Active-site residues include His-291 and Asn-329. N-linked (GlcNAc...) asparagine glycosylation occurs at Asn-347.

The protein belongs to the peptidase C1 family.

The protein resides in the endoplasmic reticulum. May have a specific function in the mechanism or regulation of T-cell cytolytic activity. The chain is Cathepsin W (CTSW) from Felis catus (Cat).